A 154-amino-acid chain; its full sequence is Ribonuclease H (154 aa).

One can recognise an RNase H type-1 domain in the interval 1 to 142 (MRKQIEIFTD…CDELAKQGAE (142 aa)). Mg(2+) is bound by residues aspartate 10, glutamate 48, aspartate 70, and aspartate 134.

The protein belongs to the RNase H family. Monomer. The cofactor is Mg(2+).

It is found in the cytoplasm. The catalysed reaction is Endonucleolytic cleavage to 5'-phosphomonoester.. Its function is as follows. Endonuclease that specifically degrades the RNA of RNA-DNA hybrids. The polypeptide is Ribonuclease H (Actinobacillus succinogenes (strain ATCC 55618 / DSM 22257 / CCUG 43843 / 130Z)).